The chain runs to 341 residues: tRNA N6-adenosine threonylcarbamoyltransferase (341 aa).

Fe cation-binding residues include histidine 111 and histidine 115. Residues 134 to 138 (LVSGG), aspartate 167, glycine 180, and asparagine 272 contribute to the substrate site. Aspartate 300 is a binding site for Fe cation.

The protein belongs to the KAE1 / TsaD family. The cofactor is Fe(2+).

The protein localises to the cytoplasm. It carries out the reaction L-threonylcarbamoyladenylate + adenosine(37) in tRNA = N(6)-L-threonylcarbamoyladenosine(37) in tRNA + AMP + H(+). In terms of biological role, required for the formation of a threonylcarbamoyl group on adenosine at position 37 (t(6)A37) in tRNAs that read codons beginning with adenine. Is involved in the transfer of the threonylcarbamoyl moiety of threonylcarbamoyl-AMP (TC-AMP) to the N6 group of A37, together with TsaE and TsaB. TsaD likely plays a direct catalytic role in this reaction. In Psychromonas ingrahamii (strain DSM 17664 / CCUG 51855 / 37), this protein is tRNA N6-adenosine threonylcarbamoyltransferase.